A 142-amino-acid chain; its full sequence is Cell division protein SepF (142 aa).

The protein belongs to the SepF family. In terms of assembly, homodimer. Interacts with FtsZ.

It is found in the cytoplasm. Cell division protein that is part of the divisome complex and is recruited early to the Z-ring. Probably stimulates Z-ring formation, perhaps through the cross-linking of FtsZ protofilaments. Its function overlaps with FtsA. The protein is Cell division protein SepF of Geobacillus kaustophilus (strain HTA426).